We begin with the raw amino-acid sequence, 150 residues long: Plasmin C (150 aa).

The first 14 residues, 1 to 14 (MRSFFLLCALVAVC), serve as a signal peptide directing secretion.

The polypeptide is Plasmin C (PLSC) (Physarum polycephalum (Slime mold)).